Consider the following 321-residue polypeptide: Leucine-rich repeat-containing protein 46 (321 aa).

4 LRR repeats span residues 45–66, 67–88, 89–110, and 111–132; these read ELQT…EGLQ, NLHS…ACIP, SLRF…LDLP, and CLQF…EFPQ. Residues 142–184 form the LRRCT domain; the sequence is NSCTNQDGYRELVTEALPLLLDLDGQPVVERWISDEEDEASSD. A phosphoserine mark is found at Ser-175 and Ser-182. A coiled-coil region spans residues 201–221; the sequence is LKELEQELSRHREHRQQTALT. Residues 235-321 are disordered; the sequence is DLPLLPGVPM…TKTTAKRSKK (87 aa).

The protein localises to the cell projection. Its subcellular location is the cilium. The protein resides in the flagellum. Functionally, required for normal spermatogenesis and male fertility. Plays an important role in sperm flagellum biogenesis. In Homo sapiens (Human), this protein is Leucine-rich repeat-containing protein 46 (LRRC46).